A 113-amino-acid polypeptide reads, in one-letter code: Large ribosomal subunit protein bL17 (113 aa).

The protein belongs to the bacterial ribosomal protein bL17 family. In terms of assembly, part of the 50S ribosomal subunit. Contacts protein L32.

The chain is Large ribosomal subunit protein bL17 from Clostridium beijerinckii (strain ATCC 51743 / NCIMB 8052) (Clostridium acetobutylicum).